Reading from the N-terminus, the 365-residue chain is UDP-N-acetylglucosamine--N-acetylmuramyl-(pentapeptide) pyrophosphoryl-undecaprenol N-acetylglucosamine transferase (365 aa).

UDP-N-acetyl-alpha-D-glucosamine is bound by residues 19–21 (TGG), Asn-131, Arg-170, Ser-201, Ile-255, 274–279 (ALTVTE), and Gln-300.

Belongs to the glycosyltransferase 28 family. MurG subfamily.

The protein localises to the cell inner membrane. The enzyme catalyses di-trans,octa-cis-undecaprenyl diphospho-N-acetyl-alpha-D-muramoyl-L-alanyl-D-glutamyl-meso-2,6-diaminopimeloyl-D-alanyl-D-alanine + UDP-N-acetyl-alpha-D-glucosamine = di-trans,octa-cis-undecaprenyl diphospho-[N-acetyl-alpha-D-glucosaminyl-(1-&gt;4)]-N-acetyl-alpha-D-muramoyl-L-alanyl-D-glutamyl-meso-2,6-diaminopimeloyl-D-alanyl-D-alanine + UDP + H(+). The protein operates within cell wall biogenesis; peptidoglycan biosynthesis. Its function is as follows. Cell wall formation. Catalyzes the transfer of a GlcNAc subunit on undecaprenyl-pyrophosphoryl-MurNAc-pentapeptide (lipid intermediate I) to form undecaprenyl-pyrophosphoryl-MurNAc-(pentapeptide)GlcNAc (lipid intermediate II). The chain is UDP-N-acetylglucosamine--N-acetylmuramyl-(pentapeptide) pyrophosphoryl-undecaprenol N-acetylglucosamine transferase from Acinetobacter baylyi (strain ATCC 33305 / BD413 / ADP1).